The following is a 523-amino-acid chain: Keratin, type II cytoskeletal 71 (523 aa).

Residues 1–129 (MSRQFTCKSG…DPEIQKVRAQ (129 aa)) form a head region. The tract at residues 130–165 (EREQIKALNNKFASFIDKVRFLEQQNQVLETKWELL) is coil 1A. An IF rod domain is found at 130-443 (EREQIKALNN…KLLESEECRM (314 aa)). The linker 1 stretch occupies residues 166 to 184 (QQLDLNNCKNNLEPILEGY). The segment at 185–276 (ISNLRKQLET…CLFEAEITQI (92 aa)) is coil 1B. A linker 12 region spans residues 277–300 (QSHISDMSVILSMDNNRNLDLDSI). Positions 301-439 (IDEVRTQYEE…ATYRKLLESE (139 aa)) are coil 2. The tail stretch occupies residues 440-523 (ECRMSGEFPS…LSAPSKKTSR (84 aa)). The disordered stretch occupies residues 492–523 (GGEGRSRGSANDYKDTLGKGSSLSAPSKKTSR). A compositionally biased stretch (basic and acidic residues) spans 493 to 508 (GEGRSRGSANDYKDTL). The segment covering 510 to 523 (KGSSLSAPSKKTSR) has biased composition (polar residues).

It belongs to the intermediate filament family. As to quaternary structure, heterodimer of a type I and a type II keratin. Associates with KRT16 and/or KRT17. In terms of tissue distribution, highly expressed in hair follicles from scalp. Specifically expressed in the inner root sheath (IRS) of the hair follicle. Present in the all 3 IRS layers: the cuticle, the Henle and the Huxley layers. Also detected in the pseudopods of specialized Huxley cells, termed Fluegelzellen, along the area of differentiated Henle cells (at protein level).

It localises to the cytoplasm. The protein resides in the cytoskeleton. Its function is as follows. Plays a central role in hair formation. Essential component of keratin intermediate filaments in the inner root sheath (IRS) of the hair follicle. This is Keratin, type II cytoskeletal 71 (KRT71) from Homo sapiens (Human).